A 28-amino-acid polypeptide reads, in one-letter code: WWRELLKKLAFTAAGHLGSVLAAKQSGW.

The protein belongs to the grammistin family. Group 3 subfamily. As to quaternary structure, exists as aggregates of 3-4 molecules. Expressed by the skin glands.

The protein resides in the secreted. Thanks to its amphiphilic alpha-helice(s), it may integrate into membrane phospholipids, leading to lysis of the membrane. Has no substantial hemolytic activity. Has antibacterial activity with a broad spectrum against various species of bacteria including both Gram-positive and Gram-negative groups. The sequence is that of Grammistin Gs A from Grammistes sexlineatus (Goldenstriped soapfish).